A 262-amino-acid chain; its full sequence is Type III pantothenate kinase (262 aa).

12–19 (DIGNTSIA) serves as a coordination point for ATP. Substrate-binding positions include Y94 and 109-112 (GSDV). D111 (proton acceptor) is an active-site residue. D132 is a K(+) binding site. T135 lines the ATP pocket. T187 is a binding site for substrate.

This sequence belongs to the type III pantothenate kinase family. As to quaternary structure, homodimer. The cofactor is NH4(+). It depends on K(+) as a cofactor.

It localises to the cytoplasm. It carries out the reaction (R)-pantothenate + ATP = (R)-4'-phosphopantothenate + ADP + H(+). The protein operates within cofactor biosynthesis; coenzyme A biosynthesis; CoA from (R)-pantothenate: step 1/5. Catalyzes the phosphorylation of pantothenate (Pan), the first step in CoA biosynthesis. The protein is Type III pantothenate kinase of Borrelia garinii subsp. bavariensis (strain ATCC BAA-2496 / DSM 23469 / PBi) (Borreliella bavariensis).